A 90-amino-acid polypeptide reads, in one-letter code: Alpha-latrotoxin associated low molecular weight protein (90 aa).

The first 18 residues, 1-18, serve as a signal peptide directing secretion; sequence MNKLFFVVFLCLIISVLA.

This sequence belongs to the arthropod CHH/MIH/GIH/VIH hormone family. Expressed by the venom gland.

It is found in the secreted. Its function is as follows. May increase the toxicity of alpha-latrotoxin and/or other venom components. Is non-toxic to mice and to the cockroach Periplaneta americana. This is Alpha-latrotoxin associated low molecular weight protein from Latrodectus geometricus (Brown widow spider).